Consider the following 550-residue polypeptide: Probable acyl-activating enzyme 6 (550 aa).

The protein belongs to the ATP-dependent AMP-binding enzyme family. As to expression, expressed at low levels in roots, leaves, stems and developing seeds.

Functionally, may act as an acid--thiol ligase that activates carboxylic acids by forming acyl-CoAs. This Arabidopsis thaliana (Mouse-ear cress) protein is Probable acyl-activating enzyme 6 (AAE6).